We begin with the raw amino-acid sequence, 182 residues long: Adenylate kinase (182 aa).

Residue 12–17 (GAGKGT) coordinates ATP. The segment at 32 to 61 (STGDLLRDEVSSGSVLGIKAAEIMNKGELV) is NMP. Residues T33, R38, 59 to 61 (ELV), 85 to 88 (GFPR), and Q92 contribute to the AMP site. Positions 126–132 (ERGRQDD) are LID. R127 serves as a coordination point for ATP. 2 residues coordinate AMP: R129 and R140. A168 is a binding site for ATP.

It belongs to the adenylate kinase family. In terms of assembly, monomer.

It localises to the cytoplasm. The catalysed reaction is AMP + ATP = 2 ADP. Its pathway is purine metabolism; AMP biosynthesis via salvage pathway; AMP from ADP: step 1/1. Its function is as follows. Catalyzes the reversible transfer of the terminal phosphate group between ATP and AMP. Plays an important role in cellular energy homeostasis and in adenine nucleotide metabolism. This chain is Adenylate kinase, found in Prochlorococcus marinus (strain NATL1A).